Here is a 311-residue protein sequence, read N- to C-terminus: tRNA(Ile)-lysidine synthase (311 aa).

31–36 (SGGKDS) contacts ATP.

This sequence belongs to the tRNA(Ile)-lysidine synthase family.

Its subcellular location is the cytoplasm. The enzyme catalyses cytidine(34) in tRNA(Ile2) + L-lysine + ATP = lysidine(34) in tRNA(Ile2) + AMP + diphosphate + H(+). Ligates lysine onto the cytidine present at position 34 of the AUA codon-specific tRNA(Ile) that contains the anticodon CAU, in an ATP-dependent manner. Cytidine is converted to lysidine, thus changing the amino acid specificity of the tRNA from methionine to isoleucine. The sequence is that of tRNA(Ile)-lysidine synthase from Petrotoga mobilis (strain DSM 10674 / SJ95).